A 614-amino-acid polypeptide reads, in one-letter code: Zinc finger and SCAN domain-containing protein 2 (614 aa).

3 disordered regions span residues 1 to 25, 42 to 73, and 162 to 200; these read MAAEVPAVSTPLSPLVQVPQEEDEQ, AVLQEDGPESEPFPQSAGKGSPQEEDAAEGPQ, and NISGGEGGQQSDGDSDFERDCGSGGAQGHAPGEDPRVVP. In terms of domain architecture, SCAN box spans 69–127; it reads AEGPQGALVRFRELCRRWLRPEVHTKEQMLTVLPREIQAWLQEHRPESSEEAVALVEDL. C2H2-type zinc fingers lie at residues 222 to 244, 250 to 272, 278 to 300, 306 to 328, 334 to 356, 362 to 384, 390 to 412, 418 to 440, 446 to 468, 474 to 496, 502 to 524, 530 to 552, 558 to 580, and 586 to 608; these read YECPQCGKTFSRKSHLITHERTH, YKCDECGKSFSDGSNFSRHQTTH, YKCRDCGKSFSRSANLITHQRIH, FQCAECGKSFSRSPNLIAHQRTH, YSCPECGKSFGNRSSLNTHQGIH, YACKECGESFSYNSNLIRHQRIH, YKCTECGQKFSQSSALITHRRTH, YQCGECGKNFSRSSNLATHRRTH, YKCGLCGKSFSQSSSLIAHQGTH, YECLTCGESFSWSSNLIKHQRTH, YRCGDCGKGFSQRSQLVVHQRTH, YKCLMCGKSFSRGSILVMHQRAH, YRCPECGKGFSWNSVLIIHQRIH, and YRCPECGKGFSNSSNFITHQRTH.

This sequence belongs to the krueppel C2H2-type zinc-finger protein family. In terms of tissue distribution, in the adult, predominantly found in spermatids. Also present in the embryo.

The protein resides in the nucleus. May be involved in transcriptional regulation during the post-meiotic stages of spermatogenesis. This is Zinc finger and SCAN domain-containing protein 2 (Zscan2) from Mus musculus (Mouse).